Here is a 457-residue protein sequence, read N- to C-terminus: MAKAKRTTKFVCQACGYESAKWMGKCPNCNEWNQMVEALEPSKKSRSAFNHTGEPSKATPITQIASETEKRVETNMPELNRVLGGGVVPGSMVLVGGDPGIGKSTLLLQVSAQLTLTNKKVLYISGEESIKQTKLRAERLQVSGDNLYVYAETNLEAVQETIDFVKPDFVVIDSIQTVYHSDVTSAAGSVSQVRECTATLMRIAKMQNIAIFIVGHVTKEGAIAGPRLLEHMVDTVLYFEGERHHAYRILRAVKNRFGSTNEMGIFEMRDVGLVEVANPSEVFLEERLEGASGSTVVASMEGTRPVLVEIQALVSPTMFGNAKRMATGIDYNKVSLIMAVLEKRVGLMLQNQDAYLKAAGGVKLDEPAVDLAVAVSVASSYRDKPTRSTDCFIGELGLTGEIRRVARIEQRVQEAAKLGFKRIFIPKNNEGNWKIPKDVQVVGVETIGEALKKALPD.

The C4-type zinc finger occupies 12-29 (CQACGYESAKWMGKCPNC). 97–104 (GDPGIGKS) lines the ATP pocket. A RadA KNRFG motif motif is present at residues 254–258 (KNRFG). Positions 353-457 (DAYLKAAGGV…GEALKKALPD (105 aa)) are lon-protease-like.

Belongs to the RecA family. RadA subfamily.

Its function is as follows. DNA-dependent ATPase involved in processing of recombination intermediates, plays a role in repairing DNA breaks. Stimulates the branch migration of RecA-mediated strand transfer reactions, allowing the 3' invading strand to extend heteroduplex DNA faster. Binds ssDNA in the presence of ADP but not other nucleotides, has ATPase activity that is stimulated by ssDNA and various branched DNA structures, but inhibited by SSB. Does not have RecA's homology-searching function. This chain is DNA repair protein RadA, found in Listeria monocytogenes serovar 1/2a (strain ATCC BAA-679 / EGD-e).